Reading from the N-terminus, the 206-residue chain is uncharacterized protein (206 aa).

This is an uncharacterized protein from Haemophilus influenzae (strain ATCC 51907 / DSM 11121 / KW20 / Rd).